A 269-amino-acid polypeptide reads, in one-letter code: MSRLEQRFAELKAEGRSALVTFVTAGDPGYDASLQILKGLPAAGADVIELGMPFTDPMADGVAIQLATLRALEAGQTLAKTLQMVREFRVDNQTTPIVLMGYYNPIHRFGVEPFVAEAKAAGVDGLIIVDLPPEHDAELATPAQAAGIDFIRLTTPTTDDARLPRVLERSSGFVYYVSVAGVTGAGSATTEHVTEAIARLRRHTDLPISVGFGIRTPEQAANIARLADGVVVGSALVDKIAQAKSADQAVNDVLSLCSALAEGVRGARR.

Residues Glu-49 and Asp-60 each act as proton acceptor in the active site.

It belongs to the TrpA family. As to quaternary structure, tetramer of two alpha and two beta chains.

The catalysed reaction is (1S,2R)-1-C-(indol-3-yl)glycerol 3-phosphate + L-serine = D-glyceraldehyde 3-phosphate + L-tryptophan + H2O. It participates in amino-acid biosynthesis; L-tryptophan biosynthesis; L-tryptophan from chorismate: step 5/5. Its function is as follows. The alpha subunit is responsible for the aldol cleavage of indoleglycerol phosphate to indole and glyceraldehyde 3-phosphate. The protein is Tryptophan synthase alpha chain of Pseudomonas putida (strain GB-1).